The following is a 438-amino-acid chain: Coenzyme A disulfide reductase (438 aa).

Residue 8-33 (GAVAGGATCASQIRRLDKESEIIVFE) participates in FAD binding. Residues Thr-15, Gln-19, Arg-22, Ser-39, and Asn-42 each coordinate substrate. The Nucleophile role is filled by Cys-43. Residue Cys-43 is the Redox-active of the active site. Residue Lys-71 participates in substrate binding. An NADP(+)-binding site is contributed by 151–166 (ALVVGAGYISLEVLEN). 267-277 (TNIPNIYALGD) is an FAD binding site. His-299 is a binding site for substrate. Tyr-419 provides a ligand contact to FAD. Lys-427 contacts substrate.

Belongs to the class-III pyridine nucleotide-disulfide oxidoreductase family. Homodimer. Requires FAD as cofactor.

The enzyme catalyses NADP(+) + 2 CoA = CoA-disulfide + NADPH + H(+). In terms of biological role, catalyzes specifically the NADPH-dependent reduction of coenzyme A disulfide. The sequence is that of Coenzyme A disulfide reductase from Staphylococcus epidermidis (strain ATCC 35984 / DSM 28319 / BCRC 17069 / CCUG 31568 / BM 3577 / RP62A).